We begin with the raw amino-acid sequence, 487 residues long: ATP synthase subunit beta (487 aa).

164 to 171 lines the ATP pocket; sequence GGAGVGKT.

It belongs to the ATPase alpha/beta chains family. As to quaternary structure, F-type ATPases have 2 components, CF(1) - the catalytic core - and CF(0) - the membrane proton channel. CF(1) has five subunits: alpha(3), beta(3), gamma(1), delta(1), epsilon(1). CF(0) has four main subunits: a(1), b(1), b'(1) and c(9-12).

The protein localises to the cellular thylakoid membrane. The enzyme catalyses ATP + H2O + 4 H(+)(in) = ADP + phosphate + 5 H(+)(out). Functionally, produces ATP from ADP in the presence of a proton gradient across the membrane. The catalytic sites are hosted primarily by the beta subunits. This Synechococcus sp. (strain CC9311) protein is ATP synthase subunit beta.